We begin with the raw amino-acid sequence, 323 residues long: Phosphatidylethanolamine:ceramide ethanolaminephosphotransferase (323 aa).

Topologically, residues 1-26 are cytoplasmic; it reads MAVPPVEMYSGSFWNRMRKPLPLRTQ. A helical membrane pass occupies residues 27–47; the sequence is VIRFTVVFVIVSFILAVALQI. The Extracellular portion of the chain corresponds to 48-73; the sequence is THERMPDPKVTKPLPDLGFEVLHKYP. The chain crosses the membrane as a helical span at residues 74-94; it reads FLFSVADCCIGFLNILSVFTA. Residues 95 to 147 lie on the Cytoplasmic side of the membrane; that stretch reads FKLYLLHRHCVGSGEPELPCNIPGVSRFFLSVWLCKENCRIELRNVHTIAWIR. The helical transmembrane segment at 148–168 threads the bilayer; it reads FITSYALLLLSRSVIMVVTSL. At 169 to 211 the chain is on the extracellular side; it reads PNPDDLCQDPPKIENRVKDVILTVLTAGAGSIHCGDLMYSGHT. His210 is an active-site residue. The helical transmembrane segment at 212 to 232 threads the bilayer; the sequence is VILTLHLMFHWIYGAMVHWSF. A topological domain (cytoplasmic) is located at residue Arg233. The helical transmembrane segment at 234 to 254 threads the bilayer; sequence PVVTVVAIFGYYCIVASRFHY. Active-site residues include His253 and Asp257. Over 255-257 the chain is Extracellular; it reads TDD. A helical membrane pass occupies residues 258-278; sequence VLVAIYLTIATFIAVGHNADG. Residues 279-323 lie on the Cytoplasmic side of the membrane; it reads APWQLQLFIRWLPCCGANSREVTEDGVPVAIVIKNEEMMNFEGKS.

This sequence belongs to the sphingomyelin synthase family.

The protein resides in the membrane. Its function is as follows. Bidirectional lipid ethanolaminephosphotransferase capable of converting phosphatidylethanolamine (PE) and ceramide to ethanolamine-phosphorylceramide (EPC) and diacylglycerol (DAG) and vice versa. Direction is dependent on the relative concentrations of DAG and ceramide as phosphoethanolamine acceptors. Does not function strictly as a SM synthase. Essential for viability of the pathogenic bloodstream stage of this human protozoan parasite and, consequently, can be considered as potential drug target. This chain is Phosphatidylethanolamine:ceramide ethanolaminephosphotransferase, found in Trypanosoma brucei brucei (strain 927/4 GUTat10.1).